An 88-amino-acid chain; its full sequence is UPF0335 protein MexAM1_META1p2947 (88 aa).

The protein belongs to the UPF0335 family.

The sequence is that of UPF0335 protein MexAM1_META1p2947 from Methylorubrum extorquens (strain ATCC 14718 / DSM 1338 / JCM 2805 / NCIMB 9133 / AM1) (Methylobacterium extorquens).